We begin with the raw amino-acid sequence, 252 residues long: Trans-aconitate 2-methyltransferase (252 aa).

The protein belongs to the methyltransferase superfamily. Tam family.

The protein resides in the cytoplasm. It catalyses the reaction trans-aconitate + S-adenosyl-L-methionine = (E)-3-(methoxycarbonyl)pent-2-enedioate + S-adenosyl-L-homocysteine. Its function is as follows. Catalyzes the S-adenosylmethionine monomethyl esterification of trans-aconitate. This Escherichia coli (strain ATCC 8739 / DSM 1576 / NBRC 3972 / NCIMB 8545 / WDCM 00012 / Crooks) protein is Trans-aconitate 2-methyltransferase.